The primary structure comprises 370 residues: Aminomethyltransferase (370 aa).

Belongs to the GcvT family. As to quaternary structure, the glycine cleavage system is composed of four proteins: P, T, L and H.

The enzyme catalyses N(6)-[(R)-S(8)-aminomethyldihydrolipoyl]-L-lysyl-[protein] + (6S)-5,6,7,8-tetrahydrofolate = N(6)-[(R)-dihydrolipoyl]-L-lysyl-[protein] + (6R)-5,10-methylene-5,6,7,8-tetrahydrofolate + NH4(+). Functionally, the glycine cleavage system catalyzes the degradation of glycine. The sequence is that of Aminomethyltransferase from Prochlorococcus marinus (strain MIT 9515).